A 799-amino-acid polypeptide reads, in one-letter code: 1-phosphatidylinositol 4,5-bisphosphate phosphodiesterase delta-4 (799 aa).

Positions 16–124 (LLMQEGMPMR…WMRGLHLLVD (109 aa)) constitute a PH domain. The interval 26-53 (KVRSKSWKKLRYFRLQNDGMTVWHARQA) is substrate binding. EF-hand domains lie at 134-169 (RLDQ…MNVE), 170-205 (MDQE…LTKR), and 206-237 (AEVQ…EQKE). Residues aspartate 147, asparagine 149, aspartate 151, lysine 153, glutamate 158, aspartate 183, serine 185, serine 187, threonine 189, and glutamate 194 each contribute to the Ca(2+) site. The GBA motif lies at 213–243 (ESFSADGQKLTLLEFSDFLREEQKERDCTSE). In terms of domain architecture, PI-PLC X-box spans 290-435 (QDMTQPLNHY…LRRKILVKGK (146 aa)). Residue histidine 305 is part of the active site. Residues asparagine 306, glutamate 335, and aspartate 337 each coordinate Ca(2+). Histidine 350 is a catalytic residue. Glutamate 384 is a Ca(2+) binding site. Residues lysine 433 and lysine 435 each coordinate substrate. Residue serine 460 is modified to Phosphoserine. Positions 530–646 (LSSLVIYLKS…GYVLKPDFLR (117 aa)) constitute a PI-PLC Y-box domain. 2 residues coordinate substrate: serine 559 and arginine 586. In terms of domain architecture, C2 spans 646–773 (RDNQSSFHPE…QGYRHIHLLS (128 aa)). Ca(2+) contacts are provided by isoleucine 687, aspartate 689, asparagine 713, aspartate 742, tyrosine 743, and aspartate 744. The short motif at 768-771 (HIHL) is the PDZ-binding element.

Interacts with GRIP1. Interacts (via GBA motif) with guanine nucleotide-binding protein G(i) alpha subunit GNAI3 (inactive GDP-bound form); low-affinity interaction. Ca(2+) is required as a cofactor.

Its subcellular location is the membrane. The protein resides in the nucleus. It is found in the cytoplasm. The protein localises to the endoplasmic reticulum. It carries out the reaction a 1,2-diacyl-sn-glycero-3-phospho-(1D-myo-inositol-4,5-bisphosphate) + H2O = 1D-myo-inositol 1,4,5-trisphosphate + a 1,2-diacyl-sn-glycerol + H(+). It catalyses the reaction a 1,2-diacyl-sn-glycero-3-phospho-(1D-myo-inositol) + H2O = 1D-myo-inositol 1-phosphate + a 1,2-diacyl-sn-glycerol + H(+). Its function is as follows. Hydrolyzes the phosphatidylinositol 4,5-bisphosphate (PIP2) to generate 2 second messenger molecules diacylglycerol (DAG) and inositol 1,4,5-trisphosphate (IP3). DAG mediates the activation of protein kinase C (PKC), while IP3 releases Ca(2+) from intracellular stores. Required for acrosome reaction in sperm during fertilization, probably by acting as an important enzyme for intracellular Ca(2+) mobilization in the zona pellucida-induced acrosome reaction. May play a role in cell growth. Modulates the liver regeneration in cooperation with nuclear PKC. Overexpression up-regulates the Erk signaling pathway and proliferation. The chain is 1-phosphatidylinositol 4,5-bisphosphate phosphodiesterase delta-4 (PLCD4) from Macaca fascicularis (Crab-eating macaque).